The chain runs to 168 residues: Crossover junction endodeoxyribonuclease RuvC (168 aa).

Catalysis depends on residues D7, E66, and D138. D7, E66, and D138 together coordinate Mg(2+).

It belongs to the RuvC family. Homodimer which binds Holliday junction (HJ) DNA. The HJ becomes 2-fold symmetrical on binding to RuvC with unstacked arms; it has a different conformation from HJ DNA in complex with RuvA. In the full resolvosome a probable DNA-RuvA(4)-RuvB(12)-RuvC(2) complex forms which resolves the HJ. It depends on Mg(2+) as a cofactor.

The protein localises to the cytoplasm. It catalyses the reaction Endonucleolytic cleavage at a junction such as a reciprocal single-stranded crossover between two homologous DNA duplexes (Holliday junction).. In terms of biological role, the RuvA-RuvB-RuvC complex processes Holliday junction (HJ) DNA during genetic recombination and DNA repair. Endonuclease that resolves HJ intermediates. Cleaves cruciform DNA by making single-stranded nicks across the HJ at symmetrical positions within the homologous arms, yielding a 5'-phosphate and a 3'-hydroxyl group; requires a central core of homology in the junction. The consensus cleavage sequence is 5'-(A/T)TT(C/G)-3'. Cleavage occurs on the 3'-side of the TT dinucleotide at the point of strand exchange. HJ branch migration catalyzed by RuvA-RuvB allows RuvC to scan DNA until it finds its consensus sequence, where it cleaves and resolves the cruciform DNA. The protein is Crossover junction endodeoxyribonuclease RuvC of Cereibacter sphaeroides (strain ATCC 17029 / ATH 2.4.9) (Rhodobacter sphaeroides).